The following is a 131-amino-acid chain: Peptide methionine sulfoxide reductase MsrB (131 aa).

Positions 8 to 130 constitute a MsrB domain; it reads DAEWRAQLTD…NSVCLDLKRS (123 aa). Positions 47, 50, 96, and 99 each coordinate Zn(2+). C119 (nucleophile) is an active-site residue.

This sequence belongs to the MsrB Met sulfoxide reductase family. Zn(2+) serves as cofactor.

It carries out the reaction L-methionyl-[protein] + [thioredoxin]-disulfide + H2O = L-methionyl-(R)-S-oxide-[protein] + [thioredoxin]-dithiol. In Alkalilimnicola ehrlichii (strain ATCC BAA-1101 / DSM 17681 / MLHE-1), this protein is Peptide methionine sulfoxide reductase MsrB.